The chain runs to 1178 residues: MDNSVHNNSNTTHPDKSRASIVNGVREERVSLSTEPPAGVKGGDNGPITVGDYNKLESRLQGAGMEDSVDELQHITDDVMPLSLLLSRLAQFSHLKLQELILDLASKPLPENTLNGNAKGSMNSSINGNVNAGVNGVPKLPSPALEDTSPESLNKKTMILKFIQDLHSRWVKALVITEWARNADEVGKLIDLRTHLAAKLELYNRAFWNMVNLKHEMAFAKVPSPDLKTALEVLSTGAVHWMPDFGYLPKPPLTTQETLHWLNEIEVVLHMRLQLHEYEQIPEPWKEYKIDNGRVTFTVPGEFEVDLTISDEDFDKQFWFLDYRTIFSPSPSKLSDGARGFIEARVNTILETEGLLGCYKYLHELTLTTKIGEFARQAVELSRTGLWTQTLRVERLNRALGIQYWSQSLHTQDSQSWILLGVHSGKSSDGADDPSSPSRLMLQWFRDGKEVKDADIPLDTDTISTEKLLMTVISRHIKYLLSSIYNSLSSKPRYAQKRGRLSLRISDPPHLDCALTMQTLGADHAVLGIGPWSGNFFFADRPPFGVGWANKINTLRNPVTEAPVVLEQLRWYHMTLHLRTLPKPADWKVLPKAPVPLDEVKRVVYSRASTTREPFHAIFLRNSRWTPQWFAMMSLSLGGDRWWTAEGHGIPGLRINIFTELSITPTDLLLPSSPLFSKLTQHATNIMDQIHDFRVLHQQHIQYTARKASPDGHRTTVVLSADMLPLQPDPDGTTQPTWAGRFIQLDYKGPAPITPSEYRESLADPKSVRRQPTRQKVMIEATVGVLHPTKFRLLRHRLDRDVLYDRRLGHFTLRFQPASGAGIIPLLRSRVQSLDRLVDIVDALHLRGKQISPKKITLREIVFSYGNGSPTMSLSNPRPKFGGNKQRSWEVRLNLAAEQGVDVILEAGNPHLRAIDYLRSAANSVHLKKLPAWFVFTLPLYEALEQLHDSWDAILAKDLGTCYVFHKSLDWLTIRFALSGAKNRLVQLDIRPRDRNGHINWHISRAKTDPNINNENDEFNKILKQRVWSISGNGFKGLGNSATAQWDHGIGPLLAVINEALQSLAGTPPPPQVPTQIQQPQQPSPHPQQAQVQEQRQQPQQQQQANPLQGAAVPGRFPHQLQQGQQLSYQQQARLQQQQRQQQQQQQQQQHMHNQNQAQQAQQRAAMNDINTPVVVLD.

Residues 1-12 (MDNSVHNNSNTT) are compositionally biased toward polar residues. Disordered regions lie at residues 1-50 (MDNS…PITV) and 1064-1178 (LAGT…VVLD). 2 stretches are compositionally biased toward low complexity: residues 1074 to 1112 (PTQI…QGAA) and 1119 to 1164 (HQLQ…AQQR).

This sequence belongs to the Mediator complex subunit 14 family. Component of the Mediator complex.

Its subcellular location is the nucleus. Functionally, component of the Mediator complex, a coactivator involved in the regulated transcription of nearly all RNA polymerase II-dependent genes. Mediator functions as a bridge to convey information from gene-specific regulatory proteins to the basal RNA polymerase II transcription machinery. Mediator is recruited to promoters by direct interactions with regulatory proteins and serves as a scaffold for the assembly of a functional preinitiation complex with RNA polymerase II and the general transcription factors. This Chaetomium globosum (strain ATCC 6205 / CBS 148.51 / DSM 1962 / NBRC 6347 / NRRL 1970) (Soil fungus) protein is Mediator of RNA polymerase II transcription subunit 14 (RGR1).